The sequence spans 313 residues: Phosphate import ATP-binding protein PstB 2 (313 aa).

The span at Met1–Gly33 shows a compositional bias: polar residues. Residues Met1–Arg40 are disordered. Positions Leu54–Ile308 constitute an ABC transporter domain. Residue Gly86–Ser93 participates in ATP binding.

Belongs to the ABC transporter superfamily. Phosphate importer (TC 3.A.1.7) family. The complex is composed of two ATP-binding proteins (PstB), two transmembrane proteins (PstC and PstA) and a solute-binding protein (PstS).

The protein localises to the cell membrane. The catalysed reaction is phosphate(out) + ATP + H2O = ADP + 2 phosphate(in) + H(+). In terms of biological role, part of the ABC transporter complex PstSACB involved in phosphate import. Responsible for energy coupling to the transport system. The protein is Phosphate import ATP-binding protein PstB 2 of Haloarcula marismortui (strain ATCC 43049 / DSM 3752 / JCM 8966 / VKM B-1809) (Halobacterium marismortui).